The chain runs to 656 residues: uncharacterized protein (656 aa).

Helical transmembrane passes span 7 to 27, 40 to 60, and 210 to 230; these read QQVL…LNHL, LMAM…FWTL, and AVFI…AFTI. The HAMP domain maps to 231–280; it reads TRPIRELLTGVKNIASGDFYQRIDLPFGGELGALIFNFNEMAERLEKYEQ. Residues 289 to 359 form the PAS domain; it reads EKAKLETLVS…PILNDIIRKN (71 aa). Residues 424 to 654 enclose the Histidine kinase domain; it reads NVSHELRTPL…CFFFDLMIAK (231 aa). Position 427 is a phosphohistidine; by autocatalysis (histidine 427).

The protein resides in the plastid. It localises to the chloroplast membrane. It carries out the reaction ATP + protein L-histidine = ADP + protein N-phospho-L-histidine.. This is an uncharacterized protein from Porphyra purpurea (Red seaweed).